A 384-amino-acid polypeptide reads, in one-letter code: Queuine tRNA-ribosyltransferase (384 aa).

The active-site Proton acceptor is Asp92. Substrate contacts are provided by residues 92–96 (DSGGF), Asp146, Gln190, and Gly217. The tract at residues 248 to 254 (GVGRPED) is RNA binding. The Nucleophile role is filled by Asp267. The segment at 272 to 276 (TRHAR) is RNA binding; important for wobble base 34 recognition. Zn(2+) contacts are provided by Cys305, Cys307, Cys310, and His337.

The protein belongs to the queuine tRNA-ribosyltransferase family. Homodimer. Within each dimer, one monomer is responsible for RNA recognition and catalysis, while the other monomer binds to the replacement base PreQ1. Zn(2+) is required as a cofactor.

The catalysed reaction is 7-aminomethyl-7-carbaguanine + guanosine(34) in tRNA = 7-aminomethyl-7-carbaguanosine(34) in tRNA + guanine. It functions in the pathway tRNA modification; tRNA-queuosine biosynthesis. In terms of biological role, catalyzes the base-exchange of a guanine (G) residue with the queuine precursor 7-aminomethyl-7-deazaguanine (PreQ1) at position 34 (anticodon wobble position) in tRNAs with GU(N) anticodons (tRNA-Asp, -Asn, -His and -Tyr). Catalysis occurs through a double-displacement mechanism. The nucleophile active site attacks the C1' of nucleotide 34 to detach the guanine base from the RNA, forming a covalent enzyme-RNA intermediate. The proton acceptor active site deprotonates the incoming PreQ1, allowing a nucleophilic attack on the C1' of the ribose to form the product. After dissociation, two additional enzymatic reactions on the tRNA convert PreQ1 to queuine (Q), resulting in the hypermodified nucleoside queuosine (7-(((4,5-cis-dihydroxy-2-cyclopenten-1-yl)amino)methyl)-7-deazaguanosine). This chain is Queuine tRNA-ribosyltransferase, found in Xylella fastidiosa (strain M12).